A 144-amino-acid polypeptide reads, in one-letter code: Large ribosomal subunit protein uL11 (144 aa).

The protein belongs to the universal ribosomal protein uL11 family. As to quaternary structure, part of the ribosomal stalk of the 50S ribosomal subunit. Interacts with L10 and the large rRNA to form the base of the stalk. L10 forms an elongated spine to which L12 dimers bind in a sequential fashion forming a multimeric L10(L12)X complex. In terms of processing, one or more lysine residues are methylated.

Forms part of the ribosomal stalk which helps the ribosome interact with GTP-bound translation factors. The sequence is that of Large ribosomal subunit protein uL11 from Neisseria gonorrhoeae (strain ATCC 700825 / FA 1090).